The following is a 101-amino-acid chain: Feather keratin Cos2-2 (101 aa).

S2 carries the N-acetylserine modification.

The protein belongs to the avian keratin family. In terms of assembly, the avian keratins (F-ker, S-ker, C-ker and B-ker) are a complex mixture of very similar polypeptides.

The protein is Feather keratin Cos2-2 of Columba livia (Rock dove).